The primary structure comprises 408 residues: Arginine biosynthesis bifunctional protein ArgJ (408 aa).

Residues Thr-162, Lys-188, Thr-199, Glu-280, Asn-403, and Ser-408 each contribute to the substrate site. Thr-199 functions as the Nucleophile in the catalytic mechanism.

It belongs to the ArgJ family. As to quaternary structure, heterotetramer of two alpha and two beta chains.

Its subcellular location is the cytoplasm. It catalyses the reaction N(2)-acetyl-L-ornithine + L-glutamate = N-acetyl-L-glutamate + L-ornithine. The catalysed reaction is L-glutamate + acetyl-CoA = N-acetyl-L-glutamate + CoA + H(+). Its pathway is amino-acid biosynthesis; L-arginine biosynthesis; L-ornithine and N-acetyl-L-glutamate from L-glutamate and N(2)-acetyl-L-ornithine (cyclic): step 1/1. It functions in the pathway amino-acid biosynthesis; L-arginine biosynthesis; N(2)-acetyl-L-ornithine from L-glutamate: step 1/4. Its function is as follows. Catalyzes two activities which are involved in the cyclic version of arginine biosynthesis: the synthesis of N-acetylglutamate from glutamate and acetyl-CoA as the acetyl donor, and of ornithine by transacetylation between N(2)-acetylornithine and glutamate. The chain is Arginine biosynthesis bifunctional protein ArgJ from Ruegeria pomeroyi (strain ATCC 700808 / DSM 15171 / DSS-3) (Silicibacter pomeroyi).